The primary structure comprises 146 residues: Globin-1 (146 aa).

The Globin domain occupies 9–146 (QLTADVKKDL…KLVAVVQAAL (138 aa)). Position 101 (H101) interacts with heme b.

The protein belongs to the globin family. As to quaternary structure, homodimer.

It localises to the cytoplasm. In Anadara inaequivalvis (Inequivalve ark), this protein is Globin-1.